We begin with the raw amino-acid sequence, 1020 residues long: C protein alpha-antigen (1020 aa).

The N-terminal stretch at 1 to 41 (MFRRSKNNSYDTSQTKQRFSIKKFKFGAASVLIGLSFLGGV) is a signal peptide. A 9 X 82 AA tandem repeats region spans residues 227–964 (VPDKDKYDPT…EVTVHVTPKP (738 aa)). 16 disordered regions span residues 261-281 (DGSK…VPGD), 306-330 (PKPV…GTPV), 342-363 (PDGS…VPGD), 388-445 (PKPV…VPGD), 470-494 (PKPV…GTPV), 506-527 (PDGS…VPGD), 552-576 (PKPV…GTPV), 588-610 (PDGS…PGDH), 634-658 (PKPV…GTPV), 670-692 (PDGS…PGDH), 716-740 (PKPV…GTPV), 752-774 (PDGS…PGDH), 798-822 (PKPV…GTPV), 834-856 (PDGS…PGDH), 880-904 (PKPV…GTPV), and 962-989 (PKPV…KLPA). The span at 272–281 (DRPDTNVPGD) shows a compositional bias: basic and acidic residues. Polar residues predominate over residues 320 to 329 (GETTVPQGTP). A compositionally biased stretch (basic and acidic residues) spans 354-363 (DRPDTNVPGD). Residues 402–411 (GETTVPQGTP) show a composition bias toward polar residues. Residues 436-445 (DRPDTNVPGD) are compositionally biased toward basic and acidic residues. Residues 484–493 (GETTVPQGTP) show a composition bias toward polar residues. Over residues 518-527 (DRPDTNVPGD) the composition is skewed to basic and acidic residues. The segment covering 566–575 (GETTVPQGTP) has biased composition (polar residues). Residues 600–610 (DRPDTNVPGDH) are compositionally biased toward basic and acidic residues. The span at 648 to 657 (GETTVPQGTP) shows a compositional bias: polar residues. The segment covering 682–692 (DRPDTNVPGDH) has biased composition (basic and acidic residues). Positions 730 to 739 (GETTVPQGTP) are enriched in polar residues. A compositionally biased stretch (basic and acidic residues) spans 764–774 (DRPDTNVPGDH). Residues 812-821 (GETTVPQGTP) show a composition bias toward polar residues. The segment covering 846-856 (DRPDTNVPGDH) has biased composition (basic and acidic residues). Over residues 894–903 (GETTVPQGTP) the composition is skewed to polar residues. An LPXTG sorting signal motif is present at residues 987–991 (LPATG). A Pentaglycyl murein peptidoglycan amidated threonine modification is found at T990. Residues 991-1020 (GENATPFFNVAALTIISSVGLLSVSKKKED) constitute a propeptide, removed by sortase.

Its subcellular location is the secreted. It is found in the cell wall. May play a role in both virulence and immunity. This Streptococcus agalactiae serotype Ia (strain ATCC 27591 / A909 / CDC SS700) protein is C protein alpha-antigen (bca).